Reading from the N-terminus, the 276-residue chain is Biotin synthase (276 aa).

The Radical SAM core domain occupies 1–226; sequence MKKIYLCAIS…EAIIMLAGGR (226 aa). Cys-17, Cys-21, and Cys-24 together coordinate [4Fe-4S] cluster. Cys-61, Cys-95, and Cys-153 together coordinate [2Fe-2S] cluster.

Belongs to the radical SAM superfamily. Biotin synthase family. As to quaternary structure, homodimer. [4Fe-4S] cluster serves as cofactor. Requires [2Fe-2S] cluster as cofactor.

The catalysed reaction is (4R,5S)-dethiobiotin + (sulfur carrier)-SH + 2 reduced [2Fe-2S]-[ferredoxin] + 2 S-adenosyl-L-methionine = (sulfur carrier)-H + biotin + 2 5'-deoxyadenosine + 2 L-methionine + 2 oxidized [2Fe-2S]-[ferredoxin]. It participates in cofactor biosynthesis; biotin biosynthesis; biotin from 7,8-diaminononanoate: step 2/2. Functionally, catalyzes the conversion of dethiobiotin (DTB) to biotin by the insertion of a sulfur atom into dethiobiotin via a radical-based mechanism. In Nautilia profundicola (strain ATCC BAA-1463 / DSM 18972 / AmH), this protein is Biotin synthase.